The sequence spans 60 residues: MAKIKITWVKSAIGYKFDQAATIKALGFKKLNQSVIQDDSAAIRGMILKVRHLVVLEEVT.

Belongs to the universal ribosomal protein uL30 family. Part of the 50S ribosomal subunit.

The chain is Large ribosomal subunit protein uL30 from Dehalococcoides mccartyi (strain ATCC BAA-2266 / KCTC 15142 / 195) (Dehalococcoides ethenogenes (strain 195)).